A 193-amino-acid chain; its full sequence is Probable DNA-directed RNA polymerase subunit delta (193 aa).

In terms of domain architecture, HTH HARE-type spans 14-81; the sequence is LALVEIATAI…GNNEWGLRAW (68 aa). Composition is skewed to acidic residues over residues 119–174 and 182–193; these read DDDV…DDNL and DLDDLSDGDIEK. The disordered stretch occupies residues 119 to 193; the sequence is DDDVIDYNDD…DDLSDGDIEK (75 aa).

Belongs to the RpoE family. As to quaternary structure, RNAP is composed of a core of 2 alpha, a beta and a beta' subunits. The core is associated with a delta subunit and one of several sigma factors.

In terms of biological role, participates in both the initiation and recycling phases of transcription. In the presence of the delta subunit, RNAP displays an increased specificity of transcription, a decreased affinity for nucleic acids, and an increased efficiency of RNA synthesis because of enhanced recycling. In Leuconostoc citreum (strain KM20), this protein is Probable DNA-directed RNA polymerase subunit delta.